The sequence spans 452 residues: Nuclear distribution protein PAC1 (452 aa).

The LisH domain maps to 12-44 (QKDELHKAILAYFSASGLSNTGAALREELGVGD). Residues 64–91 (TGVLRLQKKIMELESRLSSLQSELDSAT) adopt a coiled-coil conformation. 8 WD repeats span residues 117–158 (SHRN…RTVK), 160–200 (HTKA…KNIR), 204–245 (GHDH…CVKT), 248–287 (GHSD…HKAT), 290–350 (GHEH…LKTL), 352–391 (GHDN…RCVK), 396–435 (AHSH…INVR), and 437–452 (VIAT…VFAS).

Belongs to the WD repeat LIS1/nudF family. In terms of assembly, self-associates. Interacts with NDL1 and dynein.

The protein resides in the cytoplasm. Its subcellular location is the cytoskeleton. It localises to the spindle pole. Positively regulates the activity of the minus-end directed microtubule motor protein dynein. May enhance dynein-mediated microtubule sliding by targeting dynein to the microtubule plus end. Required for nuclear migration during vegetative growth as well as development. Required for retrograde early endosome (EE) transport from the hyphal tip. Required for localization of dynein to the mitotic spindle poles. Recruits additional proteins to the dynein complex at SPBs. This chain is Nuclear distribution protein PAC1, found in Tuber melanosporum (strain Mel28) (Perigord black truffle).